Here is a 342-residue protein sequence, read N- to C-terminus: MEPAGGAPRESARAEALLGELEARVQEVVRASSWWERHGVDCAILALSLLALPPGFLCLRSDSPLVFALGITILGVCHYTLTVKGSHLATHGALTESRGWSKVWTLFFVEVCTSFTAEYAKYGHVKMHHGYTNVLGLGDSSTWRLPCLNRYVYMFLAPLLIPIITPLVAVERLREVELRTALRTLGLISLGLYSQYWLLLNVSGFQSPSSALACMLITRSLLAHPYLHVNIFQHIGLPMFSPDKKPRRIHMMSLGVLNLPRLPVLDWAFGHSLISCHVEHHLFPRLSDNMCLKVKPVVSQFLHEKQLPYNEDSYLARFWLFLQRYEEFMVQTPPITELVGLQ.

2 consecutive transmembrane segments (helical) span residues 39–59 and 63–83; these read GVDC…FLCL and SPLV…TLTV. Residues 87 to 91 carry the Histidine box-1 motif; that stretch reads HLATH. A Histidine box-2 motif is present at residues 124–128; that stretch reads HVKMH. The next 2 helical transmembrane spans lie at 151-171 and 185-205; these read YVYM…VAVE and LGLI…VSGF. The short motif at 277–281 is the Histidine box-3 element; that stretch reads HVEHH.

It belongs to the fatty acid desaturase type 1 family.

It localises to the membrane. Its pathway is lipid metabolism; fatty acid metabolism. The sequence is that of Fatty acid desaturase 6 (FADS6) from Bos taurus (Bovine).